A 252-amino-acid chain; its full sequence is MAGHSKWANIQHRKGKQDKKRAVLFARLSKEITVASKMGGPDPAMNPRLRLAITNAKGVSVPKDNIQRAIDKGQSSGGADYADIRYEGVGPGGVGIIVEASTDNKNRAATDIRTAFSKNGGTLGTTGSVSFNFDQLGEIEYPVSAGSADEVMEAAIMAGAQDVESNEDGHWIYTAREDFAAVSTALADTFGSKVEPTSAKIIWKPKVTTPIAGDAADQLMKMLDVLDELDDVQSVYDNSEISEDEMARLSGG.

It belongs to the TACO1 family.

It localises to the cytoplasm. This is Probable transcriptional regulatory protein HNE_0161 from Hyphomonas neptunium (strain ATCC 15444).